The sequence spans 492 residues: Probable cobyric acid synthase (492 aa).

In terms of domain architecture, GATase cobBQ-type spans 252 to 444; that stretch reads PIEVNVVKFS…FHGILENFEF (193 aa). Cys-330 functions as the Nucleophile in the catalytic mechanism. His-436 is a catalytic residue.

Belongs to the CobB/CobQ family. CobQ subfamily.

It functions in the pathway cofactor biosynthesis; adenosylcobalamin biosynthesis. In terms of biological role, catalyzes amidations at positions B, D, E, and G on adenosylcobyrinic A,C-diamide. NH(2) groups are provided by glutamine, and one molecule of ATP is hydrogenolyzed for each amidation. The polypeptide is Probable cobyric acid synthase (Methanococcus maripaludis (strain DSM 14266 / JCM 13030 / NBRC 101832 / S2 / LL)).